The primary structure comprises 338 residues: MVKIKEVAMNIKINEIKMTPPTAFTPGQVIEEQEVISPSMLALQELQETTGAALYETMEEIGMALSGKLRENYKFTDAEKLERRQQALLRLIKQIQEDNGATLRPLTEENSDPDLQNAYQIIALAMALTAGGLSKKKKRDLQSQLDTLTAEEGWELAVFSLLELGEVDTATLSSLKRFMQQAIDNDEMPLSQWFRRVADWPDRCERVRILLRAVAFELSICIEPSEQSRLAAALVRLRRLLLFLGLEKECQREEWICQLPPNTLLPLLLDIICERWLFSDWLLDRLTAIVSSSKMFNRLLQQLDAQFMLIPDNCFNDEDQREQILETLREVKINQVLF.

This Salmonella typhimurium (strain LT2 / SGSC1412 / ATCC 700720) protein is Secretion system apparatus protein SsaL (ssaL).